Here is an 82-residue protein sequence, read N- to C-terminus: MVTIRLARGGAKKRPFYQVVVTDSRNARDGRFIERVGFFNPIAAGQAEALRLDLDRIEHWLGLGATVSDRVSSLIKDAKKAA.

Belongs to the bacterial ribosomal protein bS16 family.

The polypeptide is Small ribosomal subunit protein bS16 (Pectobacterium carotovorum subsp. carotovorum (strain PC1)).